A 298-amino-acid polypeptide reads, in one-letter code: Putative enoyl-CoA reductase (298 aa).

Helical transmembrane passes span 162-182, 189-209, 229-249, and 254-274; these read CVYY…PYYT, LVNA…AVHV, ILFS…WVAF, and SMLT…EWAV.

Belongs to the steroid 5-alpha reductase family.

It localises to the membrane. It participates in lipid metabolism; fatty acid biosynthesis. Its function is as follows. Involved in the synthesis of fatty acids. The sequence is that of Putative enoyl-CoA reductase from Trypanosoma brucei brucei (strain 927/4 GUTat10.1).